The chain runs to 412 residues: CHRNA7-FAM7A fusion protein (412 aa).

5 consecutive transmembrane segments (helical) span residues G144–L164, I172–I192, Q205–L225, W240–R254, and L380–A400.

This sequence belongs to the ligand-gated ion channel (TC 1.A.9) family. As to expression, expressed in hippocampus.

Its subcellular location is the membrane. The protein is CHRNA7-FAM7A fusion protein (CHRFAM7A) of Homo sapiens (Human).